The sequence spans 316 residues: LIM/homeobox protein lim-6 (316 aa).

2 consecutive LIM zinc-binding domains span residues 40-101 (KLCS…LYGK) and 102-163 (RCRR…ICNF). Positions 186-245 (PKRPRTILNAQQRRQFKTAFERSSKPSRKVREQLANETGLSVRVVQVWFQNQRAKIKKLN) form a DNA-binding region, homeobox. Residues 244–297 (LNKKDSDSGDTFKHGPGSEGRSTEDIRSSDDEEESVINLDADEVETSETSSYTD) form a disordered region. Residues 246–256 (KKDSDSGDTFK) are compositionally biased toward basic and acidic residues. The span at 273 to 289 (DDEEESVINLDADEVET) shows a compositional bias: acidic residues.

It localises to the nucleus. Transcription factor. Required for the terminal differentiation of sensory- and motor-neurons, especially GABAergic neurons, and for morphological aspects of uterine development. Plays a role in the cell-type-specific regulation of glutamic acid decarboxylase unc-25. Involved in promoting sleep-like behavioral quiescence, acting by modulating expression of transcription factor aptf-1 in the single sleep-active ring interneuron RIS. Plays a role in regulation of RIS differentiation. Required for the functional asymmetry of the ASER and ASEL chemosensory neuron pair, conferring the ability to discriminate sodium from chloride, perhaps by modulating expression of receptor-type guanylate cyclases, such as gcy-5. Involved in regulating postembryonic axon maintenance in the ventral nerve cord, acting in concert with LIM homeobox protein ceh-14, via modulation of expression of immunoglobulin domain zig genes in the interneuron PVT. May play a role in the functions of the excretory gland cell. The polypeptide is LIM/homeobox protein lim-6 (Caenorhabditis elegans).